The primary structure comprises 728 residues: Catalase-peroxidase (728 aa).

The tryptophyl-tyrosyl-methioninium (Trp-Tyr) (with M-244) cross-link spans 91 to 218 (WHSAGTYRTA…LAAVQMGLIY (128 aa)). The Proton acceptor role is filled by His92. The segment at residues 218 to 244 (YVNPEGPDGNPDPVAAARDIRDTFARM) is a cross-link (tryptophyl-tyrosyl-methioninium (Tyr-Met) (with W-91)). Residue His259 participates in heme b binding.

Belongs to the peroxidase family. Peroxidase/catalase subfamily. In terms of assembly, homodimer or homotetramer. It depends on heme b as a cofactor. In terms of processing, formation of the three residue Trp-Tyr-Met cross-link is important for the catalase, but not the peroxidase activity of the enzyme.

The enzyme catalyses H2O2 + AH2 = A + 2 H2O. It catalyses the reaction 2 H2O2 = O2 + 2 H2O. Functionally, bifunctional enzyme with both catalase and broad-spectrum peroxidase activity. This is Catalase-peroxidase from Burkholderia thailandensis (strain ATCC 700388 / DSM 13276 / CCUG 48851 / CIP 106301 / E264).